The following is a 402-amino-acid chain: Succinyl-CoA--D-citramalate CoA-transferase (402 aa).

The Nucleophile role is filled by aspartate 174.

This sequence belongs to the CoA-transferase III family. As to quaternary structure, homodimer.

It catalyses the reaction (3R)-citramalate + succinyl-CoA = (3R)-citramalyl-CoA + succinate. It carries out the reaction (R)-malate + succinyl-CoA = (R)-malyl-CoA + succinate. Involved in the 3-hydroxypropionate cycle used for autotrophic carbon dioxide fixation, and in the glyoxylate assimilation cycle used to regenerate acetyl-CoA and produce pyruvate as universal precursor for biosynthesis. Catalyzes the transfer of CoA moiety from succinyl-CoA to D-citramalate to yield citramalyl-CoA. The sequence is that of Succinyl-CoA--D-citramalate CoA-transferase from Chloroflexus aurantiacus (strain ATCC 29366 / DSM 635 / J-10-fl).